The chain runs to 584 residues: Pescadillo homolog (584 aa).

Residues 1–54 (MGGLEKKKYERGSATNYITRNKARKKLQLSLPDFRRLCILKGIYPHEPKHKKKV) form a required for 28S ribosomal RNA processing region. The interval 1 to 257 (MGGLEKKKYE…PKLEGQAQAE (257 aa)) is sufficient for nucleolar localization. Lysine 98 carries the post-translational modification N6-acetyllysine. The tract at residues 312–414 (RKKELEAQEK…LLLPVAEYFP (103 aa)) is sufficient for interaction with MAP1B. The BRCT domain occupies 321–414 (KHKKLFEGLK…LLLPVAEYFP (94 aa)). Residues 449–510 (DPGHLEEEEE…EEKKPQVMAG (62 aa)) are disordered. Acidic residues predominate over residues 454–489 (EEEEEEDEDDDNEGDVAAENEEEDVEVESEEEEEEE). Over residues 496 to 505 (EQHRLEEKKP) the composition is skewed to basic and acidic residues. Residue lysine 513 forms a Glycyl lysine isopeptide (Lys-Gly) (interchain with G-Cter in SUMO1); alternate linkage. Lysine 513 participates in a covalent cross-link: Glycyl lysine isopeptide (Lys-Gly) (interchain with G-Cter in SUMO2); alternate. The interval 535-584 (MMKKREKYLYQKIMFGKRRKIREANKLAEKRKAHDDAVRSEKKAKRTRPV) is required for 28S ribosomal RNA processing. Over residues 560–575 (KLAEKRKAHDDAVRSE) the composition is skewed to basic and acidic residues. The disordered stretch occupies residues 560–584 (KLAEKRKAHDDAVRSEKKAKRTRPV).

Belongs to the pescadillo family. Component of the PeBoW complex, composed of BOP1, PES1 and WDR12. The complex is held together by BOP1, which interacts with PES1 via its N-terminal domain and with WDR12 via a high-affinity interaction between the seven-bladed beta-propeller domains of the 2 proteins. The PeBoW complex associates with the 66S pre-ribosome. The PeBoW complex also associates with DDX27, PES1 interacts directly with DDX27. Interacts with IRS1 and UBTF. May interact with MAP1B. Sumoylated. Ubiquitous. Highest levels appear to be found in tissues that contain a population of proliferating cells, such as ovary and testis. Also appears to be highly expressed in kidney and liver. In the brain expression is restricted to neural progenitor cells and postmitotic neurons. Highly expressed in malignant astrocytes.

The protein resides in the nucleus. It is found in the nucleolus. The protein localises to the nucleoplasm. Its subcellular location is the chromosome. Component of the PeBoW complex, which is required for maturation of 28S and 5.8S ribosomal RNAs and formation of the 60S ribosome. This is Pescadillo homolog (Pes1) from Mus musculus (Mouse).